A 316-amino-acid polypeptide reads, in one-letter code: Cell division protein FtsQ (316 aa).

Positions 1 to 34 are disordered; sequence MAKAARRTKSAPARRSPRRHARQTGATIRRPKRP. Residues 1-61 lie on the Cytoplasmic side of the membrane; the sequence is MAKAARRTKS…HPLLKQMAKR (61 aa). A helical transmembrane segment spans residues 62–80; the sequence is LLLILVIVGFLAGLWAARW. The Periplasmic portion of the chain corresponds to 81–316; sequence PQLLATKTGE…AADPLVSDRI (236 aa). One can recognise a POTRA domain in the interval 97-165; that stretch reads FSVRHVEIVG…DTLVVDIVER (69 aa). The interval 295–316 is disordered; that stretch reads PEPVKKATKPAKAADPLVSDRI.

The protein belongs to the FtsQ/DivIB family. FtsQ subfamily.

It is found in the cell inner membrane. Functionally, essential cell division protein. The chain is Cell division protein FtsQ from Zymomonas mobilis subsp. mobilis (strain ATCC 31821 / ZM4 / CP4).